Here is a 280-residue protein sequence, read N- to C-terminus: Dual adapter for phosphotyrosine and 3-phosphotyrosine and 3-phosphoinositide (280 aa).

The disordered stretch occupies residues 1-20; sequence MGRAELLEGKMSTQDPSDLW. One can recognise an SH2 domain in the interval 35 to 129; sequence WYHGNLTRHA…GTLMVLKHPY (95 aa). Y139 is modified (phosphotyrosine). S141 carries the phosphoserine modification. The PH domain maps to 164-259; that stretch reads LGTKEGYLTK…WIKILRWKLS (96 aa).

As to quaternary structure, interacts with PtdIns(3,4,5)P3 and PLCG2. In vitro, interacts with PtdIns(3,4)P2. Post-translationally, phosphorylated on tyrosine residues. As to expression, highly expressed in placenta and lung, followed by brain, heart, kidney, liver, pancreas and skeletal muscle. Expressed by B-lymphocytes, but not T-lymphocytes or nonhematopoietic cells.

It localises to the cytoplasm. The protein resides in the membrane. May act as a B-cell-associated adapter that regulates B-cell antigen receptor (BCR)-signaling downstream of PI3K. The polypeptide is Dual adapter for phosphotyrosine and 3-phosphotyrosine and 3-phosphoinositide (DAPP1) (Homo sapiens (Human)).